The primary structure comprises 472 residues: Glutamate synthase [NADPH] small chain (472 aa).

Residues 38 to 69 form the 4Fe-4S ferredoxin-type domain; sequence GQAKAQADRCLSCGNPYCEWKCPVHNYIPNWL. [4Fe-4S] cluster-binding residues include C47, C50, C55, and C59.

As to quaternary structure, aggregate of 4 catalytic active heterodimers, consisting of a large and a small subunit. Requires [4Fe-4S] cluster as cofactor.

The catalysed reaction is 2 L-glutamate + NADP(+) = L-glutamine + 2-oxoglutarate + NADPH + H(+). Its pathway is amino-acid biosynthesis; L-glutamate biosynthesis via GLT pathway; L-glutamate from 2-oxoglutarate and L-glutamine (NADP(+) route): step 1/1. It functions in the pathway energy metabolism; nitrogen metabolism. In terms of biological role, catalyzes the conversion of L-glutamine and 2-oxoglutarate into two molecules of L-glutamate. The protein is Glutamate synthase [NADPH] small chain (gltD) of Escherichia coli (strain K12).